Consider the following 553-residue polypeptide: Arginine--tRNA ligase (553 aa).

The 'HIGH' region signature appears at 132 to 140 (PTGDLHIGH).

The protein belongs to the class-I aminoacyl-tRNA synthetase family. As to quaternary structure, monomer.

The protein resides in the cytoplasm. The enzyme catalyses tRNA(Arg) + L-arginine + ATP = L-arginyl-tRNA(Arg) + AMP + diphosphate. In Staphylococcus aureus (strain Mu50 / ATCC 700699), this protein is Arginine--tRNA ligase.